We begin with the raw amino-acid sequence, 61 residues long: MMLIFQIALLVLVLYSLLLVVAVPVLFSSASDWSRAKNVILVGSLLWVLMVIGVGVLSFFK.

Transmembrane regions (helical) follow at residues 8–28 and 41–61; these read ALLV…VLFS and LVGS…SFFK.

This sequence belongs to the PsbZ family. In terms of assembly, PSII is composed of 1 copy each of membrane proteins PsbA, PsbB, PsbC, PsbD, PsbE, PsbF, PsbH, PsbI, PsbJ, PsbK, PsbL, PsbM, PsbT, PsbX, PsbY, PsbZ, Psb30/Ycf12, peripheral proteins PsbO, CyanoQ (PsbQ), PsbU, PsbV and a large number of cofactors. It forms dimeric complexes.

The protein localises to the cellular thylakoid membrane. May control the interaction of photosystem II (PSII) cores with the light-harvesting antenna, regulates electron flow through the 2 photosystem reaction centers. PSII is a light-driven water plastoquinone oxidoreductase, using light energy to abstract electrons from H(2)O, generating a proton gradient subsequently used for ATP formation. This chain is Photosystem II reaction center protein Z, found in Synechococcus sp. (strain JA-3-3Ab) (Cyanobacteria bacterium Yellowstone A-Prime).